We begin with the raw amino-acid sequence, 500 residues long: Cytochrome P450 monooxygenase astJ (500 aa).

Cys440 is a binding site for heme.

The protein belongs to the cytochrome P450 family. It depends on heme as a cofactor.

The protein operates within secondary metabolite biosynthesis; terpenoid biosynthesis. Cytochrome P450 monooxygenase; part of the gene cluster that mediates the biosynthesis of astellolides, drimane-type sesquiterpene esters that show antimicrobial, anti-inflammatory, and anti-tumor activities. The first step in astellolide biosynthesis is performed by the sesquiterpene cyclase astC that catalyzes the formation of drimanyl pyrophosphate from farnesyl pyrophosphate. Drimanyl pyrophosphate is then dephosphorylated by the sesquiterpene phosphatase astI to produce drimanyl monophosphate which is further dephosphorylated to drim-8-ene-11-ol by atsK. Drim-8-ene-11-ol is converted to confertifolin, probably by the cytochrome P450 monooxygenase astD and/or the dehydrogenase astE. The cytochrome P450 monooxygenases astB, astF and astJ then hydroxylate confertifolin at C6, C14, or C15 to form trihydroxy confertifolin. The nonribosomal peptide synthetase astA catalyzes ester bond formation between trihydroxy contifolin and benzoic acid (BA) or 4-hydroxy benzoic acid (4HBA), leading to the formation of dideacetyl astellolides A and B, respectively. Finally, the O-acetyltransferase astG converts dideacetyl astellolides A and B into deacetyl astellolides A and B. This is Cytochrome P450 monooxygenase astJ from Aspergillus oryzae (strain ATCC 42149 / RIB 40) (Yellow koji mold).